The chain runs to 522 residues: Chromosomal replication initiator protein DnaA (522 aa).

Positions 1–71 are domain I, interacts with DnaA modulators; sequence MQDFWHAASA…QSLACDYWEM (71 aa). The segment at 71–185 is domain II; sequence MQVDVQFVLD…PVDDTVHERS (115 aa). A domain III, AAA+ region region spans residues 186-402; that stretch reads RLNPILTFDN…GALRKILAYS (217 aa). ATP-binding residues include glycine 230, glycine 232, lysine 233, and threonine 234. The interval 403–522 is domain IV, binds dsDNA; the sequence is NFHGKEITIE…LHVLEQTLKG (120 aa).

Belongs to the DnaA family. As to quaternary structure, oligomerizes as a right-handed, spiral filament on DNA at oriC.

Its subcellular location is the cytoplasm. Functionally, plays an essential role in the initiation and regulation of chromosomal replication. ATP-DnaA binds to the origin of replication (oriC) to initiate formation of the DNA replication initiation complex once per cell cycle. Binds the DnaA box (a 9 base pair repeat at the origin) and separates the double-stranded (ds)DNA. Forms a right-handed helical filament on oriC DNA; dsDNA binds to the exterior of the filament while single-stranded (ss)DNA is stabiized in the filament's interior. The ATP-DnaA-oriC complex binds and stabilizes one strand of the AT-rich DNA unwinding element (DUE), permitting loading of DNA polymerase. After initiation quickly degrades to an ADP-DnaA complex that is not apt for DNA replication. Binds acidic phospholipids. This chain is Chromosomal replication initiator protein DnaA, found in Ralstonia nicotianae (strain ATCC BAA-1114 / GMI1000) (Ralstonia solanacearum).